The chain runs to 332 residues: GTP 3',8-cyclase (332 aa).

One can recognise a Radical SAM core domain in the interval 7 to 221 (QYERLHDYVR…FDLCKQAGLD (215 aa)). Arginine 16 serves as a coordination point for GTP. [4Fe-4S] cluster is bound by residues cysteine 23 and cysteine 27. Tyrosine 29 is an S-adenosyl-L-methionine binding site. Residue cysteine 30 participates in [4Fe-4S] cluster binding. Position 66 (arginine 66) interacts with GTP. Residue glycine 70 coordinates S-adenosyl-L-methionine. Threonine 97 is a binding site for GTP. Serine 121 lines the S-adenosyl-L-methionine pocket. GTP is bound at residue lysine 158. Methionine 192 contributes to the S-adenosyl-L-methionine binding site. Positions 256 and 259 each coordinate [4Fe-4S] cluster. 261–263 (RLR) is a binding site for GTP. Residue cysteine 273 coordinates [4Fe-4S] cluster.

This sequence belongs to the radical SAM superfamily. MoaA family. As to quaternary structure, monomer and homodimer. It depends on [4Fe-4S] cluster as a cofactor.

It catalyses the reaction GTP + AH2 + S-adenosyl-L-methionine = (8S)-3',8-cyclo-7,8-dihydroguanosine 5'-triphosphate + 5'-deoxyadenosine + L-methionine + A + H(+). It functions in the pathway cofactor biosynthesis; molybdopterin biosynthesis. Its function is as follows. Catalyzes the cyclization of GTP to (8S)-3',8-cyclo-7,8-dihydroguanosine 5'-triphosphate. This Limosilactobacillus fermentum (strain NBRC 3956 / LMG 18251) (Lactobacillus fermentum) protein is GTP 3',8-cyclase.